A 314-amino-acid polypeptide reads, in one-letter code: Methionyl-tRNA formyltransferase (314 aa).

110 to 113 (SLLP) is a binding site for (6S)-5,6,7,8-tetrahydrofolate.

It belongs to the Fmt family.

The enzyme catalyses L-methionyl-tRNA(fMet) + (6R)-10-formyltetrahydrofolate = N-formyl-L-methionyl-tRNA(fMet) + (6S)-5,6,7,8-tetrahydrofolate + H(+). In terms of biological role, attaches a formyl group to the free amino group of methionyl-tRNA(fMet). The formyl group appears to play a dual role in the initiator identity of N-formylmethionyl-tRNA by promoting its recognition by IF2 and preventing the misappropriation of this tRNA by the elongation apparatus. This Dichelobacter nodosus (strain VCS1703A) protein is Methionyl-tRNA formyltransferase.